The sequence spans 39 residues: Cytochrome b559 subunit beta (39 aa).

A helical transmembrane segment spans residues W14–S30. H18 lines the heme pocket.

The protein belongs to the PsbE/PsbF family. Heterodimer of an alpha subunit and a beta subunit. PSII is composed of 1 copy each of membrane proteins PsbA, PsbB, PsbC, PsbD, PsbE, PsbF, PsbH, PsbI, PsbJ, PsbK, PsbL, PsbM, PsbT, PsbX, PsbY, PsbZ, Psb30/Ycf12, at least 3 peripheral proteins of the oxygen-evolving complex and a large number of cofactors. It forms dimeric complexes. It depends on heme b as a cofactor.

The protein localises to the plastid. It is found in the chloroplast thylakoid membrane. Functionally, this b-type cytochrome is tightly associated with the reaction center of photosystem II (PSII). PSII is a light-driven water:plastoquinone oxidoreductase that uses light energy to abstract electrons from H(2)O, generating O(2) and a proton gradient subsequently used for ATP formation. It consists of a core antenna complex that captures photons, and an electron transfer chain that converts photonic excitation into a charge separation. In Cedrus deodara (Deodar cedar), this protein is Cytochrome b559 subunit beta.